We begin with the raw amino-acid sequence, 201 residues long: Large ribosomal subunit protein uL4 (201 aa).

The tract at residues 44 to 66 (KAQKTRAEVRGGGKKPWRQKGTG) is disordered. The span at 55–66 (GGKKPWRQKGTG) shows a compositional bias: basic residues.

The protein belongs to the universal ribosomal protein uL4 family. Part of the 50S ribosomal subunit.

One of the primary rRNA binding proteins, this protein initially binds near the 5'-end of the 23S rRNA. It is important during the early stages of 50S assembly. It makes multiple contacts with different domains of the 23S rRNA in the assembled 50S subunit and ribosome. In terms of biological role, forms part of the polypeptide exit tunnel. The sequence is that of Large ribosomal subunit protein uL4 from Alteromonas mediterranea (strain DSM 17117 / CIP 110805 / LMG 28347 / Deep ecotype).